Here is a 216-residue protein sequence, read N- to C-terminus: RNA pyrophosphohydrolase (216 aa).

The 144-residue stretch at 6-149 folds into the Nudix hydrolase domain; the sequence is GFRPNVGIIL…KRDVYQLALT (144 aa). The short motif at 38-59 is the Nudix box element; that stretch reads GGIKYGETPMQAMYRELHEETG. Residues 159-180 are disordered; the sequence is AQRTDKSRGPRAPRYPRVSNGH.

Belongs to the Nudix hydrolase family. RppH subfamily. The cofactor is a divalent metal cation.

Functionally, accelerates the degradation of transcripts by removing pyrophosphate from the 5'-end of triphosphorylated RNA, leading to a more labile monophosphorylated state that can stimulate subsequent ribonuclease cleavage. The protein is RNA pyrophosphohydrolase of Burkholderia thailandensis (strain ATCC 700388 / DSM 13276 / CCUG 48851 / CIP 106301 / E264).